The sequence spans 242 residues: Probable 2-phosphosulfolactate phosphatase (242 aa).

Belongs to the ComB family. Requires Mg(2+) as cofactor.

The enzyme catalyses (2R)-O-phospho-3-sulfolactate + H2O = (2R)-3-sulfolactate + phosphate. This is Probable 2-phosphosulfolactate phosphatase from Prochlorococcus marinus (strain NATL2A).